A 199-amino-acid chain; its full sequence is N-(5'-phosphoribosyl)anthranilate isomerase (199 aa).

It belongs to the TrpF family.

The enzyme catalyses N-(5-phospho-beta-D-ribosyl)anthranilate = 1-(2-carboxyphenylamino)-1-deoxy-D-ribulose 5-phosphate. Its pathway is amino-acid biosynthesis; L-tryptophan biosynthesis; L-tryptophan from chorismate: step 3/5. In Solibacter usitatus (strain Ellin6076), this protein is N-(5'-phosphoribosyl)anthranilate isomerase.